Consider the following 430-residue polypeptide: Gamma-glutamyl phosphate reductase (430 aa).

It belongs to the gamma-glutamyl phosphate reductase family.

The protein resides in the cytoplasm. It carries out the reaction L-glutamate 5-semialdehyde + phosphate + NADP(+) = L-glutamyl 5-phosphate + NADPH + H(+). It functions in the pathway amino-acid biosynthesis; L-proline biosynthesis; L-glutamate 5-semialdehyde from L-glutamate: step 2/2. Catalyzes the NADPH-dependent reduction of L-glutamate 5-phosphate into L-glutamate 5-semialdehyde and phosphate. The product spontaneously undergoes cyclization to form 1-pyrroline-5-carboxylate. This chain is Gamma-glutamyl phosphate reductase, found in Rhodopseudomonas palustris (strain HaA2).